The sequence spans 327 residues: Sideroflexin-2 (327 aa).

A run of 5 helical transmembrane segments spans residues 99 to 119, 143 to 163, 175 to 195, 228 to 248, and 267 to 287; these read GMLITGGMLAFYRTVPAVVLW, VTQLGVAYVSATTSALVAAIG, LFQRFVPFAAVAAANFVNIPL, EVVVSRIAMAAPGMLVLPLIM, and FQTLLVGCFLCFMVPTACALF.

The protein belongs to the sideroflexin family.

It localises to the mitochondrion membrane. The catalysed reaction is L-serine(in) = L-serine(out). Its function is as follows. Mitochondrial amino-acid transporter that mediates transport of serine into mitochondria. This Drosophila melanogaster (Fruit fly) protein is Sideroflexin-2.